The following is a 265-amino-acid chain: Putative carbamate hydrolase RutD (265 aa).

The AB hydrolase-1 domain occupies 14–123 (PTLVLSSGLG…WSSPNPHSAR (110 aa)).

Belongs to the AB hydrolase superfamily. Hydrolase RutD family.

The catalysed reaction is carbamate + 2 H(+) = NH4(+) + CO2. Functionally, involved in pyrimidine catabolism. May facilitate the hydrolysis of carbamate, a reaction that can also occur spontaneously. The chain is Putative carbamate hydrolase RutD from Stutzerimonas stutzeri (strain A1501) (Pseudomonas stutzeri).